A 119-amino-acid chain; its full sequence is Protein ELF4-LIKE 2 (119 aa).

Residues 91 to 119 (SVDASSEGESTGTLKSDGKANNQKRFRSG) are disordered. Residues 93–111 (DASSEGESTGTLKSDGKAN) are compositionally biased toward polar residues.

The protein belongs to the EARLY FLOWERING 4 family. As to quaternary structure, homodimer.

The protein localises to the nucleus. Component of the central CCA1/LHY-TOC1 feedback loop in the circadian clock that promotes clock accuracy and is required for sustained rhythms in the absence of daily light/dark cycles. The chain is Protein ELF4-LIKE 2 (EFL2) from Arabidopsis thaliana (Mouse-ear cress).